Consider the following 284-residue polypeptide: NAD kinase (284 aa).

Aspartate 70 serves as the catalytic Proton acceptor. NAD(+) contacts are provided by residues 70–71 (DG), 139–140 (NE), lysine 167, aspartate 169, leucine 177, 180–185 (TAYNLS), and glutamine 236.

Belongs to the NAD kinase family. The cofactor is a divalent metal cation.

It is found in the cytoplasm. The catalysed reaction is NAD(+) + ATP = ADP + NADP(+) + H(+). In terms of biological role, involved in the regulation of the intracellular balance of NAD and NADP, and is a key enzyme in the biosynthesis of NADP. Catalyzes specifically the phosphorylation on 2'-hydroxyl of the adenosine moiety of NAD to yield NADP. In Helicobacter pylori (strain HPAG1), this protein is NAD kinase.